A 119-amino-acid polypeptide reads, in one-letter code: Secreted RxLR effector protein RXLR-C04 (119 aa).

A signal peptide spans M1–A22. Residues R40–V77 carry the RxLR-dEER motif. N46 carries an N-linked (GlcNAc...) asparagine glycan.

This sequence belongs to the RxLR effector family.

The protein resides in the secreted. It localises to the host cytoplasm. Its subcellular location is the host nucleus. In terms of biological role, secreted effector that suppresses pattern-triggered immunity (PTI) in plant host. This Plasmopara halstedii (Downy mildew of sunflower) protein is Secreted RxLR effector protein RXLR-C04.